Consider the following 78-residue polypeptide: Acyl carrier protein (78 aa).

A Carrier domain is found at Ser2–Asn77. Ser37 carries the post-translational modification O-(pantetheine 4'-phosphoryl)serine.

This sequence belongs to the acyl carrier protein (ACP) family. In terms of processing, 4'-phosphopantetheine is transferred from CoA to a specific serine of apo-ACP by AcpS. This modification is essential for activity because fatty acids are bound in thioester linkage to the sulfhydryl of the prosthetic group.

It localises to the cytoplasm. It participates in lipid metabolism; fatty acid biosynthesis. Its function is as follows. Carrier of the growing fatty acid chain in fatty acid biosynthesis. The polypeptide is Acyl carrier protein (Neisseria gonorrhoeae (strain ATCC 700825 / FA 1090)).